The sequence spans 268 residues: Regulatory protein zeste (268 aa).

The DNA-binding element occupies 1 to 72 (TAEEKEVLYT…WLNSRLRKQY (72 aa)). Low complexity predominate over residues 94–108 (VSVASAVPQQQQQQH). Residues 94 to 133 (VSVASAVPQQQQQQHHQQHDNVKEEPEYQISPDASEHNPQ) are disordered. Residues 110–119 (QQHDNVKEEP) show a composition bias toward basic and acidic residues.

As to quaternary structure, self-associates forming complexes of several hundred monomers.

Its subcellular location is the nucleus. Functionally, involved in transvection phenomena (= synapsis-dependent gene expression), where the synaptic pairing of chromosomes carrying genes with which zeste interacts influences the expression of these genes. Zeste binds to DNA and stimulates transcription from a nearby promoter. This Drosophila sechellia (Fruit fly) protein is Regulatory protein zeste (z).